Reading from the N-terminus, the 86-residue chain is RNA-binding protein Hfq (86 aa).

Residues 9–68 (DPYLNTLRKEKVGVSIYLVNGIKLQGTIESFDQFVILLKNTVSQMVYKHAISTVVPVRPI) enclose the Sm domain.

Belongs to the Hfq family. As to quaternary structure, homohexamer.

Functionally, RNA chaperone that binds small regulatory RNA (sRNAs) and mRNAs to facilitate mRNA translational regulation in response to envelope stress, environmental stress and changes in metabolite concentrations. Also binds with high specificity to tRNAs. In Pseudomonas savastanoi pv. phaseolicola (strain 1448A / Race 6) (Pseudomonas syringae pv. phaseolicola (strain 1448A / Race 6)), this protein is RNA-binding protein Hfq.